Consider the following 609-residue polypeptide: Putative transcriptional regulatory protein y4pA (609 aa).

In terms of domain architecture, Sigma-54 factor interaction spans Ile-313–Ile-533. ATP is bound at residue His-395 to Ser-404. The H-T-H motif DNA-binding region spans Arg-578–Arg-597.

In terms of biological role, probable transcriptional regulator that acts in conjunction with sigma-54. This is Putative transcriptional regulatory protein y4pA from Sinorhizobium fredii (strain NBRC 101917 / NGR234).